Here is a 363-residue protein sequence, read N- to C-terminus: Homeobox protein DTH-2 (363 aa).

Positions Arg-133–Gln-192 form a DNA-binding region, homeobox. Residues Lys-189–Leu-246 form a disordered region. Residues Ser-191–Pro-219 are compositionally biased toward basic and acidic residues. The span at Asn-220–Arg-231 shows a compositional bias: polar residues. The span at Ser-232–Leu-246 shows a compositional bias: basic and acidic residues.

It belongs to the NK-2 homeobox family. Intestine and unidentified peripheral parenchymal cells. Slightly higher levels in the cephalic region compared to other body regions.

Its subcellular location is the nucleus. In terms of biological role, this protein might be involved in determination and/or differentiation of nerve cells in the continuous replacement of neurons in the cephalic region. This is Homeobox protein DTH-2 (DTH-2) from Girardia tigrina (Planarian).